The chain runs to 239 residues: Adapter protein MecA (239 aa).

The span at 118 to 128 (EQRTKEKEAQG) shows a compositional bias: basic and acidic residues. Residues 118–137 (EQRTKEKEAQGSKRQKSSAR) are disordered.

The protein belongs to the MecA family. In terms of assembly, homodimer.

Functionally, enables the recognition and targeting of unfolded and aggregated proteins to the ClpC protease or to other proteins involved in proteolysis. The polypeptide is Adapter protein MecA (Staphylococcus aureus (strain bovine RF122 / ET3-1)).